The following is a 64-amino-acid chain: Large ribosomal subunit protein bL35 (64 aa).

Over residues 22–31 the composition is skewed to basic residues; sequence GKVKHGHAYR. The disordered stretch occupies residues 22–64; it reads GKVKHGHAYRSHLAQSKTTKQKRQSRKSTLMNNSDFKRLKKLI.

Belongs to the bacterial ribosomal protein bL35 family.

This Mesomycoplasma hyopneumoniae (strain 232) (Mycoplasma hyopneumoniae) protein is Large ribosomal subunit protein bL35.